We begin with the raw amino-acid sequence, 179 residues long: Acireductone dioxygenase (179 aa).

Residues 1–12 are compositionally biased toward acidic residues; sequence MVEAWYMDDSEE. The interval 1-21 is disordered; that stretch reads MVEAWYMDDSEEDQRRPHRLE. The Fe(2+) site is built by His-88, His-90, Glu-94, and His-133. Ni(2+)-binding residues include His-88, His-90, Glu-94, and His-133.

It belongs to the acireductone dioxygenase (ARD) family. In terms of assembly, monomer. Interacts with MMP14. Fe(2+) serves as cofactor. It depends on Ni(2+) as a cofactor.

The protein resides in the cytoplasm. The protein localises to the nucleus. Its subcellular location is the cell membrane. It catalyses the reaction 1,2-dihydroxy-5-(methylsulfanyl)pent-1-en-3-one + O2 = 4-methylsulfanyl-2-oxobutanoate + formate + 2 H(+). The enzyme catalyses 1,2-dihydroxy-5-(methylsulfanyl)pent-1-en-3-one + O2 = 3-(methylsulfanyl)propanoate + CO + formate + 2 H(+). It participates in amino-acid biosynthesis; L-methionine biosynthesis via salvage pathway; L-methionine from S-methyl-5-thio-alpha-D-ribose 1-phosphate: step 5/6. Catalyzes 2 different reactions between oxygen and the acireductone 1,2-dihydroxy-3-keto-5-methylthiopentene (DHK-MTPene) depending upon the metal bound in the active site. Fe-containing acireductone dioxygenase (Fe-ARD) produces formate and 2-keto-4-methylthiobutyrate (KMTB), the alpha-ketoacid precursor of methionine in the methionine recycle pathway. Ni-containing acireductone dioxygenase (Ni-ARD) produces methylthiopropionate, carbon monoxide and formate, and does not lie on the methionine recycle pathway. Also down-regulates cell migration mediated by MMP14. This chain is Acireductone dioxygenase, found in Monodelphis domestica (Gray short-tailed opossum).